Reading from the N-terminus, the 500-residue chain is Cytochrome P450 71B36 (500 aa).

Residues Met1–Thr21 traverse the membrane as a helical segment. Cys440 serves as a coordination point for heme.

It belongs to the cytochrome P450 family. The cofactor is heme.

Its subcellular location is the membrane. The polypeptide is Cytochrome P450 71B36 (CYP71B36) (Arabidopsis thaliana (Mouse-ear cress)).